The sequence spans 193 residues: dCTP deaminase (193 aa).

Residues 110–115, Asp128, 136–138, Tyr171, Lys178, and Gln182 each bind dCTP; these read RSSLAR and VLE. The active-site Proton donor/acceptor is the Glu138.

Belongs to the dCTP deaminase family. As to quaternary structure, homotrimer.

It carries out the reaction dCTP + H2O + H(+) = dUTP + NH4(+). It participates in pyrimidine metabolism; dUMP biosynthesis; dUMP from dCTP (dUTP route): step 1/2. Functionally, catalyzes the deamination of dCTP to dUTP. In Tolumonas auensis (strain DSM 9187 / NBRC 110442 / TA 4), this protein is dCTP deaminase.